We begin with the raw amino-acid sequence, 240 residues long: MTVKPLYRRVLLKASGEALMGEQHFGIDVSVVDRIAADIAEARGLGIEVGVVIGGGNIFRGVAVASKGGDRVTGDHMGMLATVINSLALRTSLHKIGVDAVVLSAIAMPELCESFSQRQADAYMNQGRVVIFAGGTGNPFFTTDSAAALRAAEIGADALFKGTQVDGVYSADPKKDPNATRFERISHAEVINRGLSIMDTAAIALARENNIPIIVYSIHEKGGFGDILRGGGRCTVVADD.

13–16 (KASG) contributes to the ATP binding site. G55 contributes to the UMP binding site. ATP is bound by residues G56 and R60. UMP contacts are provided by residues D75 and 136–143 (TGNPFFTT). ATP is bound by residues T163, Q164, Y169, and D172.

Belongs to the UMP kinase family. In terms of assembly, homohexamer.

The protein resides in the cytoplasm. It catalyses the reaction UMP + ATP = UDP + ADP. The protein operates within pyrimidine metabolism; CTP biosynthesis via de novo pathway; UDP from UMP (UMPK route): step 1/1. With respect to regulation, inhibited by UTP. In terms of biological role, catalyzes the reversible phosphorylation of UMP to UDP. This Mesorhizobium japonicum (strain LMG 29417 / CECT 9101 / MAFF 303099) (Mesorhizobium loti (strain MAFF 303099)) protein is Uridylate kinase.